Consider the following 81-residue polypeptide: NAD(P)H-quinone oxidoreductase subunit O (81 aa).

This sequence belongs to the complex I NdhO subunit family. In terms of assembly, NDH-1 can be composed of about 15 different subunits; different subcomplexes with different compositions have been identified which probably have different functions.

It is found in the cellular thylakoid membrane. It catalyses the reaction a plastoquinone + NADH + (n+1) H(+)(in) = a plastoquinol + NAD(+) + n H(+)(out). The enzyme catalyses a plastoquinone + NADPH + (n+1) H(+)(in) = a plastoquinol + NADP(+) + n H(+)(out). Its function is as follows. NDH-1 shuttles electrons from an unknown electron donor, via FMN and iron-sulfur (Fe-S) centers, to quinones in the respiratory and/or the photosynthetic chain. The immediate electron acceptor for the enzyme in this species is believed to be plastoquinone. Couples the redox reaction to proton translocation, and thus conserves the redox energy in a proton gradient. Cyanobacterial NDH-1 also plays a role in inorganic carbon-concentration. This is NAD(P)H-quinone oxidoreductase subunit O from Prochlorococcus marinus (strain MIT 9303).